The primary structure comprises 845 residues: Translation initiation factor IF-2 (845 aa).

The segment at Met1–Lys260 is disordered. Positions Ala68–Pro81 are enriched in pro residues. A compositionally biased stretch (basic and acidic residues) spans Arg101 to Ala140. 2 stretches are compositionally biased toward low complexity: residues Ala141–Ala166 and Thr173–Pro191. Residues Ala194–Arg215 show a composition bias toward basic and acidic residues. Residues Pro344 to Lys514 form the tr-type G domain. A G1 region spans residues Gly353–Thr360. Gly353–Thr360 is a binding site for GTP. Positions Gly378–His382 are G2. The G3 stretch occupies residues Asp400–Gly403. GTP is bound by residues Asp400 to His404 and Asn454 to Asp457. The segment at Asn454 to Asp457 is G4. The tract at residues Ser490–Leu492 is G5.

It belongs to the TRAFAC class translation factor GTPase superfamily. Classic translation factor GTPase family. IF-2 subfamily.

Its subcellular location is the cytoplasm. Functionally, one of the essential components for the initiation of protein synthesis. Protects formylmethionyl-tRNA from spontaneous hydrolysis and promotes its binding to the 30S ribosomal subunits. Also involved in the hydrolysis of GTP during the formation of the 70S ribosomal complex. The protein is Translation initiation factor IF-2 of Sphingopyxis alaskensis (strain DSM 13593 / LMG 18877 / RB2256) (Sphingomonas alaskensis).